We begin with the raw amino-acid sequence, 477 residues long: MTDDMHKTENFPPDWLLVESLDLEAQGVAHRADGKVVFIKGALPFELVSANVHRKKNNWEQGVVTAIHRESSQRVQPGCPHFGLHEGACGGCKMQHLHVGAQVAVKQRVLEDNLWHLGKVKADTILRPIEGPAWGYRYRARLSVRYVRKKGELLIGFHERKSGYVADMKECPVLPPHVSDLLLPLRALISAMEAMETCPQIELACGDSVTALVLRHMEPLTHGDLALLRGFAAQHAGVQWWLQPNGPETAHLLDEGGQALSYDLPEFGIHMPFKPTDFTQVNPHINRVLVSRALRLLDAKRHERVIDWFCGLGNFTLPIATQAREVLGVEGSEALVARSRQNFKLNQALAPVNKSLAATNFVARNLFEMTPELLIQDGAADKWLVDPPREGAVSLVQALAELHQQKLDPIGHPPIVGAVGWMPPKRIVYVSCNPSTLARDADLLVHQAGYRCSFAGVVNMFPHTAHVESMAVFDLEV.

One can recognise a TRAM domain in the interval 7–66 (KTENFPPDWLLVESLDLEAQGVAHRADGKVVFIKGALPFELVSANVHRKKNNWEQGVVTA). Positions 79, 89, 92, and 171 each coordinate [4Fe-4S] cluster. S-adenosyl-L-methionine is bound by residues Q280, F309, N314, E330, N365, and D386. Residue C432 is the Nucleophile of the active site.

This sequence belongs to the class I-like SAM-binding methyltransferase superfamily. RNA M5U methyltransferase family. RlmD subfamily.

It carries out the reaction uridine(1939) in 23S rRNA + S-adenosyl-L-methionine = 5-methyluridine(1939) in 23S rRNA + S-adenosyl-L-homocysteine + H(+). In terms of biological role, catalyzes the formation of 5-methyl-uridine at position 1939 (m5U1939) in 23S rRNA. This Albidiferax ferrireducens (strain ATCC BAA-621 / DSM 15236 / T118) (Rhodoferax ferrireducens) protein is 23S rRNA (uracil(1939)-C(5))-methyltransferase RlmD.